The chain runs to 697 residues: Disintegrin and metalloproteinase domain-containing protein 26A (697 aa).

Positions 1-22 (MFLKFCLWTMFFFSAWSPIGHA) are cleaved as a signal peptide. A propeptide spanning residues 23-187 (KYSSLLEVVT…NAPTLLQIPY (165 aa)) is cleaved from the precursor. An N-linked (GlcNAc...) asparagine glycan is attached at Asn-127. Positions 159–166 (MRCGLSEE) match the Cysteine switch motif. Cys-161 contributes to the Zn(2+) binding site. Residues 188–671 (ENWWTHHRFI…PPLPLSHSKW (484 aa)) are Extracellular-facing. One can recognise a Peptidase M12B domain in the interval 195–385 (RFIEYFVVLD…TKRSCLYDIP (191 aa)). N-linked (GlcNAc...) asparagine glycosylation occurs at Asn-214. 3 cysteine pairs are disulfide-bonded: Cys-305-Cys-380, Cys-344-Cys-366, and Cys-346-Cys-351. Residue His-329 coordinates Zn(2+). Residue Glu-330 is part of the active site. His-333 and His-339 together coordinate Zn(2+). 6 N-linked (GlcNAc...) asparagine glycosylation sites follow: Asn-365, Asn-391, Asn-464, Asn-506, Asn-531, and Asn-573. The Disintegrin domain occupies 392–478 (LTVCGNKVVE…ECPGDVYKAD (87 aa)). Cys-450 and Cys-470 are joined by a disulfide. An EGF-like domain is found at 616–649 (LVSNCSPQLYHMQGICNNKQHCHCGVTWKPPDCQ). 2 cysteine pairs are disulfide-bonded: Cys-620–Cys-631 and Cys-639–Cys-648. A helical transmembrane segment spans residues 672-692 (IVYILIVLDVCIVIIIYLFSF). Over 693 to 697 (YKLSK) the chain is Cytoplasmic.

It depends on Zn(2+) as a cofactor. As to expression, expressed in sperm (at protein level). Expressed specifically in testis.

It is found in the membrane. In terms of biological role, sperm surface membrane protein that may be involved in spermatogenesis and fertilization. This is Disintegrin and metalloproteinase domain-containing protein 26A from Mus musculus (Mouse).